The sequence spans 578 residues: Acyl-coenzyme A synthetase ACSM5, mitochondrial (578 aa).

The N-terminal 22 residues, 1–22, are a transit peptide targeting the mitochondrion; the sequence is MRLWLRGLVYQARRSSWGVFRI. Position 96 is an N6-acetyllysine; alternate (K96). N6-succinyllysine; alternate is present on K96. At K151 the chain carries N6-acetyllysine. 229–237 is an ATP binding site; that stretch reads TSGTTGTPK. K335 bears the N6-acetyllysine mark. ATP is bound by residues 367–372, D454, R469, and K565; that span reads EGYGQS.

This sequence belongs to the ATP-dependent AMP-binding enzyme family. Mg(2+) serves as cofactor. Requires Mn(2+) as cofactor.

It is found in the mitochondrion matrix. The enzyme catalyses a medium-chain fatty acid + ATP + CoA = a medium-chain fatty acyl-CoA + AMP + diphosphate. Functionally, catalyzes the activation of fatty acids by CoA to produce an acyl-CoA, the first step in fatty acid metabolism. This chain is Acyl-coenzyme A synthetase ACSM5, mitochondrial (Acsm5), found in Rattus norvegicus (Rat).